Here is a 397-residue protein sequence, read N- to C-terminus: Elongation factor Tu (397 aa).

A tr-type G domain is found at 10–207 (LPHVNVGTIG…TLDSYIPEPE (198 aa)). A G1 region spans residues 19–26 (GHVDHGKT). 19 to 26 (GHVDHGKT) provides a ligand contact to GTP. T26 lines the Mg(2+) pocket. The segment at 60–64 (GITIN) is G2. A G3 region spans residues 81 to 84 (DCPG). GTP contacts are provided by residues 81-85 (DCPGH) and 136-139 (NKAD). The segment at 136-139 (NKAD) is G4. Residues 174–176 (SAR) form a G5 region.

This sequence belongs to the TRAFAC class translation factor GTPase superfamily. Classic translation factor GTPase family. EF-Tu/EF-1A subfamily. In terms of assembly, monomer.

It localises to the cytoplasm. It catalyses the reaction GTP + H2O = GDP + phosphate + H(+). In terms of biological role, GTP hydrolase that promotes the GTP-dependent binding of aminoacyl-tRNA to the A-site of ribosomes during protein biosynthesis. This Pseudomonas fluorescens (strain Pf0-1) protein is Elongation factor Tu.